The chain runs to 130 residues: UPF0102 protein BT_1882 (130 aa).

This sequence belongs to the UPF0102 family.

The protein is UPF0102 protein BT_1882 of Bartonella tribocorum (strain CIP 105476 / IBS 506).